Reading from the N-terminus, the 104-residue chain is Pyrimidine/purine nucleoside phosphorylase (104 aa).

The protein belongs to the nucleoside phosphorylase PpnP family.

The enzyme catalyses a purine D-ribonucleoside + phosphate = a purine nucleobase + alpha-D-ribose 1-phosphate. The catalysed reaction is adenosine + phosphate = alpha-D-ribose 1-phosphate + adenine. It carries out the reaction cytidine + phosphate = cytosine + alpha-D-ribose 1-phosphate. It catalyses the reaction guanosine + phosphate = alpha-D-ribose 1-phosphate + guanine. The enzyme catalyses inosine + phosphate = alpha-D-ribose 1-phosphate + hypoxanthine. The catalysed reaction is thymidine + phosphate = 2-deoxy-alpha-D-ribose 1-phosphate + thymine. It carries out the reaction uridine + phosphate = alpha-D-ribose 1-phosphate + uracil. It catalyses the reaction xanthosine + phosphate = alpha-D-ribose 1-phosphate + xanthine. Functionally, catalyzes the phosphorolysis of diverse nucleosides, yielding D-ribose 1-phosphate and the respective free bases. Can use uridine, adenosine, guanosine, cytidine, thymidine, inosine and xanthosine as substrates. Also catalyzes the reverse reactions. This is Pyrimidine/purine nucleoside phosphorylase from Geotalea uraniireducens (strain Rf4) (Geobacter uraniireducens).